A 290-amino-acid chain; its full sequence is Ciliary microtubule inner protein 6 (290 aa).

Positions 76–112 (ENQGDWWPHGKGLENPFQPPYDTKSTQRSDFKKPTCP) are disordered. Mn regions lie at residues 128–160 (GIVP…ARKT) and 213–246 (SAES…IRVA). The segment at 197-228 (SGSCSSEQSKKTEKGNSAESKMISPGLCRQNS) is disordered.

Its subcellular location is the cell projection. It is found in the cilium. This chain is Ciliary microtubule inner protein 6 (CIMIP6), found in Bos taurus (Bovine).